We begin with the raw amino-acid sequence, 377 residues long: Delta(12) fatty acid desaturase DES8.11 (377 aa).

Transmembrane regions (helical) follow at residues 55–75 (LIVA…IPTP) and 79–99 (LAWP…WVIG). The Histidine box-1 signature appears at 100–104 (HECGH). Residues 112-132 (LIDDIVGFVLHSALLTPYFSW) form a helical membrane-spanning segment. Residues 136-140 (HRNHH) carry the Histidine box-2 motif. Helical transmembrane passes span 174–194 (VFTL…TNIS), 220–240 (VLLS…LVAA), and 244–264 (AWVI…FVLI). Residues 310–314 (HVLHH) carry the Histidine box-3 motif.

Belongs to the fatty acid desaturase type 1 family.

It localises to the membrane. It functions in the pathway lipid metabolism; polyunsaturated fatty acid biosynthesis. Functionally, converts linoleic acid into a conjugated octadecatrienoic acid, probably calendic acid. The polypeptide is Delta(12) fatty acid desaturase DES8.11 (Calendula officinalis (Pot marigold)).